An 813-amino-acid polypeptide reads, in one-letter code: MLRIVWKPLKIRLPVWRRYQSNISINSIRNVGIIAHIDAGKTTLTEKMLYYGGFTSHFGNVDTGDTVMDYLPAERQRGITINSAAISFTWRNQRINLIDTPGHADFTFEVERSVAVLDGAVAIIDGSAGVEAQTKVVWKQATKRGIPKVIFVNKMDRVGSSLGSTIRSIYTNLDCPYPLVLQLPVYSDGLQERKFLGILDILQQKMILWDTSDNKLGTDGTHVQELPIPESHMERFIEARNALVMSLCDVDETLCDEYLENEDSLAFTNDRLFKIIKQKTISGNVVPVLCGSSLKNIAVQPIMDAIIDYLPSPVEFYEKNASKETSSDKIISLDKRPLLAKIFKVIHHASRGILTYVRVNEGTLSRGMMMFNPRTKKSERAIRLYNVFADQTQEVDCISAGNIGVISGIKQFHTGDIIINKENSKNFHEYLSGNQSVISIPEPVCIASIEPYSLKDEPALLEALANMNREDPSFRYTQDLENGQLLIQGMGIMHLQVSYERLVSEFGARASLGKVQVGYRETLIDVSFNSVTLSTENKENLIINVYLIPISDEGDETLKKYFSEGEIQKVRSKGQEDGVLFYGWKPENSCTLPDHLSFQRIQENIYFGIVAGLSHGPLHGFPLTNLQSFCTISSFLSNDFPLSLLTQASMKATKNAVFSLYKRSPKSFRILEPYMDVTITTPEEYVGIVSKDLVGKRGATIKEITEIGKNAASKDSQIAIGILGERYLPADEPSSVKANNASSLLQSSSVIKCIRAQVPLEQILDYNSVISSLTKGNAKFLMSHPMESQTPKLVNYGSSFHPMSMQRQKRIFP.

A mitochondrion-targeting transit peptide spans 1–20; the sequence is MLRIVWKPLKIRLPVWRRYQ. One can recognise a tr-type G domain in the interval 26–314; the sequence is NSIRNVGIIA…AIIDYLPSPV (289 aa). GTP contacts are provided by residues 35–42, 99–103, and 153–156; these read AHIDAGKT, DTPGH, and NKMD.

This sequence belongs to the TRAFAC class translation factor GTPase superfamily. Classic translation factor GTPase family. EF-G/EF-2 subfamily.

The protein localises to the mitochondrion. Functionally, mitochondrial GTPase that mediates the disassembly of ribosomes from messenger RNA at the termination of mitochondrial protein biosynthesis. Not involved in the GTP-dependent ribosomal translocation step during translation elongation. This is Ribosome-releasing factor 2, mitochondrial (mef2) from Schizosaccharomyces pombe (strain 972 / ATCC 24843) (Fission yeast).